The following is a 648-amino-acid chain: Adhesion G-protein coupled receptor G1 (648 aa).

The signal sequence occupies residues 1–24 (MKQNPAKTARMWIIICLLFVLGQA). Residues 25 to 370 (TDNDRDFKMC…STVRHLKALT (346 aa)) are Extracellular-facing. Cys-34 and Cys-96 form a disulfide bridge. Residues Asn-62, Asn-91, Asn-114, Asn-146, Asn-222, Asn-262, and Asn-286 are each glycosylated (N-linked (GlcNAc...) asparagine). Residues Cys-127 and Cys-176 are joined by a disulfide bond. One can recognise a GAIN-B domain in the interval 214–361 (MDEEFTGHNF…AILVQVEQKS (148 aa)). Disulfide bonds link Cys-313/Cys-343 and Cys-331/Cys-345. The segment at 313–361 (CVSWDTKQDNEVNWKDDGCDTVKINEEQTECHCNHLTYFAILVQVEQKS) is GPS. The stachel stretch occupies residues 349-361 (TYFAILVQVEQKS). Residues 371 to 391 (FITAVGCAVSLVSCLVLFYWL) traverse the membrane as a helical segment. At 392 to 408 (CKRRRGKKNQISLVHRG) the chain is on the cytoplasmic side. A helical transmembrane segment spans residues 409–429 (LVVAIFLLCLFFILTGILANV). The Extracellular segment spans residues 430–443 (ANETVCQLTGSLLH). Residue Asn-431 is glycosylated (N-linked (GlcNAc...) asparagine). A helical membrane pass occupies residues 444-464 (YGLLSTLCWMAMEVFHTFLLV). Residues 465–471 (RKVFNSP) lie on the Cytoplasmic side of the membrane. A helical transmembrane segment spans residues 472–492 (LPIWIFYLMGFGFPFLLVSIL). At 493–530 (LSVGDIYGERKIKPSDDVNNPYRMCWMTEGDKSQLAHY) the chain is on the extracellular side. The chain crosses the membrane as a helical span at residues 531–551 (IINIGLLAVVVSSGLVMLFLV). Topologically, residues 552–563 (VREIRNRPDWKK) are cytoplasmic. The chain crosses the membrane as a helical span at residues 564 to 586 (IHVAFLSIWGLTCLYGTTWALGF). At 587-595 (LDFGPFSEV) the chain is on the extracellular side. Residues 596–618 (TLFLFCIINSLQGFFLMLRYYAL) traverse the membrane as a helical segment. At 619-648 (ERMKKKDVSSSDGSSSGSSKQHMLQTNEKS) the chain is on the cytoplasmic side.

Belongs to the G-protein coupled receptor 2 family. LN-TM7 subfamily. Heterodimer of 2 chains generated by proteolytic processing; the large extracellular N-terminal fragment (ADGRG1 NT) and the membrane-bound C-terminal fragment (ADGRG1-CT) predominantly remain associated and non-covalently linked. Post-translationally, autoproteolytically cleaved into 2 fragments; the large extracellular N-terminal fragment (ADGRG1 NT) and the membrane-bound C-terminal fragment (ADGRG1 CT) predominantly remain associated and non-covalently linked.

It localises to the cell membrane. Its activity is regulated as follows. Forms a heterodimer of 2 chains generated by proteolytic processing that remain associated through non-covalent interactions mediated by the GAIN-B domain. In the inactivated receptor, the Stachel sequence (also named stalk) is embedded in the GAIN-B domain, where it adopts a beta-strand conformation. On activation, the Stachel moves into the 7 transmembrane region and adopts a twisted hook-shaped configuration that forms contacts within the receptor, leading to coupling of a G-alpha protein, which activates signaling. The cleaved GAIN-B and N-terminal domains can then dissociate from the rest of the receptor. In terms of biological role, adhesion G-protein coupled receptor (aGPCR), which is involved in oligodendrocyte development and maintenance of peripheral myelin. Ligand binding causes a conformation change that triggers signaling via guanine nucleotide-binding proteins (G proteins) and modulates the activity of downstream effectors, such as RhoA pathway. Adgrg1 is coupled to G(12) and/or G(13) G proteins (gna12 and gna13, respectively) and mediates the activation Rho small GTPases. Adgrg1-dependent RhoA signaling promotes timely radial sorting of axons. Required to establish proper myelin thickness and facilitate organization of the myelin sheath in the mature peripheral nervous system. This is Adhesion G-protein coupled receptor G1 from Danio rerio (Zebrafish).